The following is a 90-amino-acid chain: Conotoxin Rg9.1 (90 aa).

The signal sequence occupies residues 1-20; the sequence is MHLSLARSAVLILLLLFALG. A propeptide spanning residues 21 to 60 is cleaved from the precursor; sequence NFVGVQPGQITRDADHGINLRSLRKQMSRSPLVKGAFCGQ. Disulfide bonds link C58-C71, C62-C73, and C67-C80.

This sequence belongs to the conotoxin P superfamily. As to expression, expressed by the venom duct.

It is found in the secreted. Probable neurotoxin that inhibits ion channels. This Conus regius (Crown cone) protein is Conotoxin Rg9.1.